Consider the following 165-residue polypeptide: Small ribosomal subunit protein uS5 (165 aa).

The 64-residue stretch at leucine 13–isoleucine 76 folds into the S5 DRBM domain.

This sequence belongs to the universal ribosomal protein uS5 family. Part of the 30S ribosomal subunit. Contacts proteins S4 and S8.

Functionally, with S4 and S12 plays an important role in translational accuracy. In terms of biological role, located at the back of the 30S subunit body where it stabilizes the conformation of the head with respect to the body. The chain is Small ribosomal subunit protein uS5 from Chlamydia abortus (strain DSM 27085 / S26/3) (Chlamydophila abortus).